The following is a 279-amino-acid chain: NH(3)-dependent NAD(+) synthetase (279 aa).

Glycine 39–serine 46 contributes to the ATP binding site. Aspartate 45 provides a ligand contact to Mg(2+). Arginine 122 provides a ligand contact to deamido-NAD(+). Position 142 (threonine 142) interacts with ATP. Residue glutamate 147 participates in Mg(2+) binding. Residues lysine 155 and aspartate 162 each coordinate deamido-NAD(+). ATP contacts are provided by lysine 171 and serine 193. Deamido-NAD(+) is bound at residue histidine 253–lysine 254.

Belongs to the NAD synthetase family. Homodimer.

It catalyses the reaction deamido-NAD(+) + NH4(+) + ATP = AMP + diphosphate + NAD(+) + H(+). Its pathway is cofactor biosynthesis; NAD(+) biosynthesis; NAD(+) from deamido-NAD(+) (ammonia route): step 1/1. In terms of biological role, catalyzes the ATP-dependent amidation of deamido-NAD to form NAD. Uses ammonia as a nitrogen source. In Sulfolobus acidocaldarius (strain ATCC 33909 / DSM 639 / JCM 8929 / NBRC 15157 / NCIMB 11770), this protein is NH(3)-dependent NAD(+) synthetase.